The sequence spans 364 residues: MALALLEDWCRIMSVDEQKSLMVTGIPADFEEAEIQEVLQETLKSLGRYRLLGKIFRKQENANAVLLELLEDTDVSAIPSEVQGKGGVWKVIFKTPNQDTEFLERLNLFLEKEGQTVSGMFRALGQEGVSPATVPCISPELLAHLLGQAMAHAPQPLLPMRYRKLRVFSGSAVPAPEEESFEVWLEQATEIVKEWPVTEAEKKRWLAESLRGPALDLMHIVQADNPSISVEECLEAFKQVFGSLESRRTAQVRYLKTYQEEGEKVSAYVLRLETLLRRAVEKRAIPRRIADQVRLEQVMAGATLNQMLWCRLRELKDQGPPPSFLELMKVIREEEEEEASFENESIEEPEERDGYGRWNHEGDD.

Ala2 is modified (N-acetylalanine). A compositionally biased stretch (acidic residues) spans 335–351 (EEEEASFENESIEEPEE). The tract at residues 335 to 364 (EEEEASFENESIEEPEERDGYGRWNHEGDD) is disordered. A compositionally biased stretch (basic and acidic residues) spans 352 to 364 (RDGYGRWNHEGDD).

The protein belongs to the PNMA family. In terms of tissue distribution, brain-specific. In some cancer patients, specifically expressed by testicular tumor cells.

Its subcellular location is the nucleus. It localises to the nucleolus. The chain is Paraneoplastic antigen Ma2 (PNMA2) from Homo sapiens (Human).